The chain runs to 140 residues: MVRALLFHVITYTKFIVPVVKLLIMSAIAGVIAGAFGGGIGGVGDAIGTIIGDLERAIARFGGSIVNAFKTVIDKILTLAVRIGRIIEKYFRIAVHYIVLFLRLAYRYMYSFYTEFQKDPWRSLQFVGSMAILLNNSLFP.

Helical transmembrane passes span 23–43 and 93–110; these read LIMSAIAGVIAGAFGGGIGGV and IAVHYIVLFLRLAYRYMY.

It is found in the host membrane. The protein is Putative transmembrane protein 49 (SIFV0049) of Saccharolobus islandicus (Sulfolobus islandicus).